The following is a 514-amino-acid chain: L-threonine dehydratase biosynthetic IlvA (514 aa).

Lys-62 carries the post-translational modification N6-(pyridoxal phosphate)lysine. Residues Asn-89, 188–192, and Ser-315 contribute to the pyridoxal 5'-phosphate site; that span reads GGGGL. 2 consecutive ACT-like domains span residues 339-411 and 434-504; these read ALLA…DLSD and RLYS…DETN.

This sequence belongs to the serine/threonine dehydratase family. Homotetramer. Requires pyridoxal 5'-phosphate as cofactor.

The enzyme catalyses L-threonine = 2-oxobutanoate + NH4(+). The protein operates within amino-acid biosynthesis; L-isoleucine biosynthesis; 2-oxobutanoate from L-threonine: step 1/1. Its activity is regulated as follows. Isoleucine allosterically inhibits whereas valine allosterically activates this enzyme. Its function is as follows. Catalyzes the anaerobic formation of alpha-ketobutyrate and ammonia from threonine in a two-step reaction. The first step involved a dehydration of threonine and a production of enamine intermediates (aminocrotonate), which tautomerizes to its imine form (iminobutyrate). Both intermediates are unstable and short-lived. The second step is the nonenzymatic hydrolysis of the enamine/imine intermediates to form 2-ketobutyrate and free ammonia. In the low water environment of the cell, the second step is accelerated by RidA. In Escherichia coli (strain K12), this protein is L-threonine dehydratase biosynthetic IlvA (ilvA).